Consider the following 482-residue polypeptide: Cytochrome c-552 (482 aa).

The first 26 residues, 1–26 (MIKVSNALQRILIGAALALFGGGAQA), serve as a signal peptide directing secretion. H98 contacts heme c. Heme is bound by residues C126, C129, and K130. Heme c is bound by residues C164, C167, H168, C213, C216, and H217. Residues E219, Y220, K265, and Q267 each contribute to the Ca(2+) site. Y220 contributes to the substrate binding site. H268 provides a ligand contact to substrate. The heme c site is built by H279, C286, C289, H290, H305, C318, C321, H322, and H397.

It belongs to the cytochrome c-552 family. Ca(2+) is required as a cofactor. The cofactor is heme c.

The protein localises to the periplasm. The catalysed reaction is 6 Fe(III)-[cytochrome c] + NH4(+) + 2 H2O = 6 Fe(II)-[cytochrome c] + nitrite + 8 H(+). It functions in the pathway nitrogen metabolism; nitrate reduction (assimilation). Catalyzes the reduction of nitrite to ammonia, consuming six electrons in the process. The protein is Cytochrome c-552 of Edwardsiella ictaluri (strain 93-146).